A 245-amino-acid polypeptide reads, in one-letter code: UPF0246 protein Cgl1995/cg2186 (245 aa).

Belongs to the UPF0246 family.

The protein is UPF0246 protein Cgl1995/cg2186 of Corynebacterium glutamicum (strain ATCC 13032 / DSM 20300 / JCM 1318 / BCRC 11384 / CCUG 27702 / LMG 3730 / NBRC 12168 / NCIMB 10025 / NRRL B-2784 / 534).